We begin with the raw amino-acid sequence, 222 residues long: Glutathione S-transferase 3 (222 aa).

Residues 2–83 (APLKLYGMPL…YIASKYASEG (82 aa)) enclose the GST N-terminal domain. Glutathione-binding positions include serine 12, 13 to 14 (PN), 41 to 42 (HK), 54 to 55 (QI), and 67 to 68 (ES). Residues 89–219 (ATASAAKLEV…AAIPLPPPPS (131 aa)) enclose the GST C-terminal domain.

Belongs to the GST superfamily. Phi family. As to quaternary structure, homodimer.

It catalyses the reaction RX + glutathione = an S-substituted glutathione + a halide anion + H(+). Its function is as follows. Conjugation of reduced glutathione to a wide number of exogenous and endogenous hydrophobic electrophiles. Involved in the detoxification of certain herbicides. The polypeptide is Glutathione S-transferase 3 (Zea mays (Maize)).